Here is a 407-residue protein sequence, read N- to C-terminus: Multidrug resistance protein MdtH (407 aa).

10 consecutive transmembrane segments (helical) span residues 13–33 (CFLI…FPLI), 88–108 (LGFI…SCML), 139–159 (VLML…TWLL), 163–183 (FKLV…FNAW), 210–230 (FVIY…VMLM), 247–267 (WMYI…TWWS), 277–297 (LMVG…VKNL), 298–318 (HTLL…EPAR), 340–360 (LSLA…YDIG), and 368–388 (LPWI…YCQF).

Belongs to the major facilitator superfamily. DHA1 family. MdtH (TC 2.A.1.2.21) subfamily.

It localises to the cell inner membrane. In Blochmanniella pennsylvanica (strain BPEN), this protein is Multidrug resistance protein MdtH.